Consider the following 148-residue polypeptide: Protein Turandot Z (148 aa).

A signal peptide spans 1–23 (MYFAIRLSFVLAVLFCLTGNGSA).

Belongs to the Turandot family.

The protein resides in the secreted. Its function is as follows. A humoral factor that may play a role in stress tolerance. The chain is Protein Turandot Z from Drosophila simulans (Fruit fly).